The following is a 49-amino-acid chain: Large ribosomal subunit protein bL33 (49 aa).

The protein belongs to the bacterial ribosomal protein bL33 family.

The polypeptide is Large ribosomal subunit protein bL33 (Streptococcus gordonii (strain Challis / ATCC 35105 / BCRC 15272 / CH1 / DL1 / V288)).